Here is a 164-residue protein sequence, read N- to C-terminus: FMN reductase (NADH) RutF (164 aa).

Belongs to the non-flavoprotein flavin reductase family. RutF subfamily.

The catalysed reaction is FMNH2 + NAD(+) = FMN + NADH + 2 H(+). Its function is as follows. Catalyzes the reduction of FMN to FMNH2 which is used to reduce pyrimidine by RutA via the Rut pathway. The polypeptide is FMN reductase (NADH) RutF (Escherichia coli O127:H6 (strain E2348/69 / EPEC)).